The following is a 190-amino-acid chain: Protein GrpE (190 aa).

Residues 1 to 11 (MSNQDEPQNSP) show a composition bias toward polar residues. Residues 1–36 (MSNQDEPQNSPEEFAEDQQADVALEEASSDSSETAA) are disordered. Residues 13 to 28 (EFAEDQQADVALEEAS) are compositionally biased toward acidic residues.

Belongs to the GrpE family. As to quaternary structure, homodimer.

The protein localises to the cytoplasm. In terms of biological role, participates actively in the response to hyperosmotic and heat shock by preventing the aggregation of stress-denatured proteins, in association with DnaK and GrpE. It is the nucleotide exchange factor for DnaK and may function as a thermosensor. Unfolded proteins bind initially to DnaJ; upon interaction with the DnaJ-bound protein, DnaK hydrolyzes its bound ATP, resulting in the formation of a stable complex. GrpE releases ADP from DnaK; ATP binding to DnaK triggers the release of the substrate protein, thus completing the reaction cycle. Several rounds of ATP-dependent interactions between DnaJ, DnaK and GrpE are required for fully efficient folding. The polypeptide is Protein GrpE (Teredinibacter turnerae (strain ATCC 39867 / T7901)).